The following is a 449-amino-acid chain: Tubulin alpha-2 chain (449 aa).

Position 11 (Gln-11) interacts with GTP. Lys-40 carries the N6-acetyllysine modification. Glu-71, Ser-140, Gly-144, Thr-145, Thr-179, Asn-206, and Asn-228 together coordinate GTP. Residue Glu-71 participates in Mg(2+) binding. Glu-254 is an active-site residue.

This sequence belongs to the tubulin family. Dimer of alpha and beta chains. A typical microtubule is a hollow water-filled tube with an outer diameter of 25 nm and an inner diameter of 15 nM. Alpha-beta heterodimers associate head-to-tail to form protofilaments running lengthwise along the microtubule wall with the beta-tubulin subunit facing the microtubule plus end conferring a structural polarity. Microtubules usually have 13 protofilaments but different protofilament numbers can be found in some organisms and specialized cells. Mg(2+) serves as cofactor. In terms of processing, undergoes a tyrosination/detyrosination cycle, the cyclic removal and re-addition of a C-terminal tyrosine residue by the enzymes tubulin tyrosine carboxypeptidase (TTCP) and tubulin tyrosine ligase (TTL), respectively. Post-translationally, acetylation of alpha chains at Lys-40 stabilizes microtubules and affects affinity and processivity of microtubule motors. This modification has a role in multiple cellular functions, ranging from cell motility, cell cycle progression or cell differentiation to intracellular trafficking and signaling. During the early stages of oogenesis lky/Alpha-tubulin N-acetyltransferase 2 is the main acetyltransferase responsible for Lys-40 acetylation in germline cells while Atat/alpha-tubulin N-acetyltransferase 1 is the main acetyltransferase responsible for Lys-40 acetylation in somatic cells.

The protein resides in the cytoplasm. Its subcellular location is the cytoskeleton. The catalysed reaction is GTP + H2O = GDP + phosphate + H(+). Tubulin is the major constituent of microtubules, a cylinder consisting of laterally associated linear protofilaments composed of alpha- and beta-tubulin heterodimers. Microtubules grow by the addition of GTP-tubulin dimers to the microtubule end, where a stabilizing cap forms. Below the cap, tubulin dimers are in GDP-bound state, owing to GTPase activity of alpha-tubulin. The protein is Tubulin alpha-2 chain (alphaTub85E) of Drosophila melanogaster (Fruit fly).